Consider the following 1845-residue polypeptide: Histone-lysine N-methyltransferase, H3 lysine-79 specific (1845 aa).

Positions Met1 to Asn44 are enriched in polar residues. 8 disordered regions span residues Met1 to Gly67, Pro83 to Thr306, Ser450 to Lys470, Gln486 to Lys571, Arg585 to Tyr681, Gly741 to Glu767, Gln862 to Glu881, and Lys963 to Leu1102. Composition is skewed to low complexity over residues Asn52 to Gly67, Ser90 to Pro162, Pro191 to Ser226, and Asn239 to Asn263. Residues Val268–Gly280 are compositionally biased toward acidic residues. The span at Ser282–Pro294 shows a compositional bias: polar residues. The segment covering Ile295–Lys304 has biased composition (basic and acidic residues). Low complexity predominate over residues Ile453–Lys464. Positions Arg585–Asp679 are enriched in basic and acidic residues. Residues Lys625 to Lys639 are required for interaction with nucleosomes and DNA. Composition is skewed to low complexity over residues Asn750 to Asn763, Gln862 to Thr877, Asn972 to Asn1011, and Asn1020 to Ile1067. Basic and acidic residues predominate over residues Lys1069–Lys1080. Over residues Lys1084–Leu1102 the composition is skewed to low complexity. Residues Phe1125 to Thr1446 enclose the DOT1 domain. Residues Tyr1251 to Ala1254, Phe1274 to Asn1283, and Glu1300 contribute to the S-adenosyl-L-methionine site. Disordered stretches follow at residues Leu1463 to Ile1559, Arg1610 to Asp1661, His1735 to Gln1762, Asn1772 to Asn1791, and Thr1799 to Lys1845. Low complexity-rich tracts occupy residues Ser1467 to Ser1522, Asn1541 to Asn1556, and Arg1610 to Asp1642. Over residues Asn1643–Ser1656 the composition is skewed to acidic residues. Over residues Arg1745 to Lys1759 the composition is skewed to basic residues. Composition is skewed to low complexity over residues Thr1799–Asp1817 and Lys1835–Lys1845.

This sequence belongs to the class I-like SAM-binding methyltransferase superfamily. DOT1 family.

The protein resides in the nucleus. It catalyses the reaction L-lysyl(79)-[histone H3] + 3 S-adenosyl-L-methionine = N(6),N(6),N(6)-trimethyl-L-lysyl(79)-[histone H3] + 3 S-adenosyl-L-homocysteine + 3 H(+). Its function is as follows. Histone methyltransferase that specifically methylates histone H3 to form H3K79me. This methylation is required for telomere silencing, correct growth and development, and for resistance to DNA damage induced by UV LIGHT. The protein is Histone-lysine N-methyltransferase, H3 lysine-79 specific of Dictyostelium discoideum (Social amoeba).